The following is a 172-amino-acid chain: Ribosome maturation factor RimM (172 aa).

Residues 96-168 enclose the PRC barrel domain; sequence DGEFYYHEII…RVQVELMEGL (73 aa).

This sequence belongs to the RimM family. Binds ribosomal protein uS19.

It is found in the cytoplasm. Functionally, an accessory protein needed during the final step in the assembly of 30S ribosomal subunit, possibly for assembly of the head region. Essential for efficient processing of 16S rRNA. May be needed both before and after RbfA during the maturation of 16S rRNA. It has affinity for free ribosomal 30S subunits but not for 70S ribosomes. This chain is Ribosome maturation factor RimM, found in Streptococcus agalactiae serotype III (strain NEM316).